We begin with the raw amino-acid sequence, 437 residues long: ATP-dependent RNA helicase RhlB (437 aa).

Residues 9–37 (KKFADFPLHKEVQQALNEVGFEFCTPIQA) carry the Q motif motif. Residues 40-219 (LPILLAKKDI…YDHMNEPEKV (180 aa)) form the Helicase ATP-binding domain. Residue 53-60 (AQTGTGKT) participates in ATP binding. A DEAD box motif is present at residues 165-168 (DEAD). The region spanning 243 to 390 (KMPLLLSLLE…VTSYDSEALL (148 aa)) is the Helicase C-terminal domain. The tract at residues 394 to 437 (PAPKRIHRKPSSHSRNSRDRSGSRPQGGHRGNAPRRHDKTRRHS) is disordered. Positions 425-437 (NAPRRHDKTRRHS) are enriched in basic residues.

This sequence belongs to the DEAD box helicase family. RhlB subfamily. Component of the RNA degradosome, which is a multiprotein complex involved in RNA processing and mRNA degradation.

It is found in the cytoplasm. The catalysed reaction is ATP + H2O = ADP + phosphate + H(+). In terms of biological role, DEAD-box RNA helicase involved in RNA degradation. Has RNA-dependent ATPase activity and unwinds double-stranded RNA. The polypeptide is ATP-dependent RNA helicase RhlB (Shewanella piezotolerans (strain WP3 / JCM 13877)).